A 261-amino-acid polypeptide reads, in one-letter code: Acyl-[acyl-carrier-protein]--UDP-N-acetylglucosamine O-acyltransferase (261 aa).

The protein belongs to the transferase hexapeptide repeat family. LpxA subfamily. As to quaternary structure, homotrimer.

The protein resides in the cytoplasm. The catalysed reaction is a (3R)-hydroxyacyl-[ACP] + UDP-N-acetyl-alpha-D-glucosamine = a UDP-3-O-[(3R)-3-hydroxyacyl]-N-acetyl-alpha-D-glucosamine + holo-[ACP]. Its pathway is glycolipid biosynthesis; lipid IV(A) biosynthesis; lipid IV(A) from (3R)-3-hydroxytetradecanoyl-[acyl-carrier-protein] and UDP-N-acetyl-alpha-D-glucosamine: step 1/6. Functionally, involved in the biosynthesis of lipid A, a phosphorylated glycolipid that anchors the lipopolysaccharide to the outer membrane of the cell. This is Acyl-[acyl-carrier-protein]--UDP-N-acetylglucosamine O-acyltransferase from Sulfurimonas denitrificans (strain ATCC 33889 / DSM 1251) (Thiomicrospira denitrificans (strain ATCC 33889 / DSM 1251)).